Here is a 599-residue protein sequence, read N- to C-terminus: MPVRQLPETVVNRIAAGEVVERPASVVKELVENAIDAGASRIDIFTDGGGRRRIGITDDGAGMTHADLTLAVDRHATSKLDDEDLLAIRTLGFRGEALPSIGSVAKLSITTRHAAEPHAWALAVEGGAKSPIVPAALSHGTRVEVSDLFYATPARLKFLKTDRTEAEAIREVVRRLAMARPDIAFSMAGEERAPVTWAAALPGAAGRLTRLGDILGGDFRSNAIEVRSERDGVVVEGFAAAPSLTRANALGQYLFVNGRPVRDKLIIGAVRAAYSDYLPRDRHPVVALFVSLDSREVDANVHPAKTEVRFRDAGLVRALIVHALKEGLAREGKRTAANDAGATISSFRPSFAPRANWDWRSSPSYPVAGSAAFDAAAGFAEREQSGFDVGAPSADVRSYQPSADFTDRPLGAARTQIHQTYIVAQTRDGLVVVDQHAAHERLVYEKLKASLATNGVQRQILLIPEIVELDEATVERLVARGEELATFGLVVESFGPGAVAVRETPSLLGKTDAGALLRDLAEHMAEWDEALPLERRLLHVAATMACHGSVRAGRVLKPEEMNALLREMEDTPNSGQCNHGRPTYVELKLSDIEKLFGRR.

It belongs to the DNA mismatch repair MutL/HexB family.

Functionally, this protein is involved in the repair of mismatches in DNA. It is required for dam-dependent methyl-directed DNA mismatch repair. May act as a 'molecular matchmaker', a protein that promotes the formation of a stable complex between two or more DNA-binding proteins in an ATP-dependent manner without itself being part of a final effector complex. The protein is DNA mismatch repair protein MutL of Rhodopseudomonas palustris (strain BisB18).